The following is a 380-amino-acid chain: MTTTYKILVLPGDHIGPEIMAEAIKVLTTIETHRPNLHFNLTTDLVGGTSIDTHGVPITQSVLDAAKASDAVLFGSIGGPEWAGVHPTPESGLLQLRQHLDAFANLRPCEFLVPSLVGASPIREHVVKGTRFIVVRENCGGAYFGEKKEEEDVASDLWVYTRPEIERLARVSAAVARIMGRSEDDNQAATVWSADKANVLASGRLWRRITSDIFAKEFPDITLQHQLADSMAMLMVRDPRRFNGVIHTDNTFGDILSDISGAITGTLGLMPSASLCGVPGEGHRSNGIYEPVHGSAPDISGKGLANPVAQILSVAMMLRYSMGLEKEATAVERAVVKVLDAKSEGGLEIRTGDLGGRATCSQVGDAVCEVLGPLLQGKKA.

79–90 (GPEWAGVHPTPE) provides a ligand contact to NAD(+). 4 residues coordinate substrate: Arg-97, Arg-107, Arg-136, and Asp-229. Asp-229, Asp-254, and Asp-258 together coordinate Mg(2+). Residue 294-306 (GSAPDISGKGLAN) coordinates NAD(+).

Belongs to the isocitrate and isopropylmalate dehydrogenases family. Homodimer. Mg(2+) is required as a cofactor. Mn(2+) serves as cofactor.

Its subcellular location is the cytoplasm. The catalysed reaction is (2R,3S)-3-isopropylmalate + NAD(+) = 4-methyl-2-oxopentanoate + CO2 + NADH. Its pathway is amino-acid biosynthesis; L-leucine biosynthesis; L-leucine from 3-methyl-2-oxobutanoate: step 3/4. Its function is as follows. Catalyzes the oxidation of 3-carboxy-2-hydroxy-4-methylpentanoate (3-isopropylmalate) to 3-carboxy-4-methyl-2-oxopentanoate. The product decarboxylates to 4-methyl-2 oxopentanoate. The protein is 3-isopropylmalate dehydrogenase (LEU2) of Hapsidospora chrysogena (Acremonium chrysogenum).